Here is a 642-residue protein sequence, read N- to C-terminus: Threonine--tRNA ligase (642 aa).

Positions 1-65 constitute a TGS domain; it reads MSDIITVTLP…DEDVKLQIFT (65 aa). Positions 248-541 are catalytic; it reads DHRKLGKELD…LIEHFAGAFP (294 aa). Cysteine 342, histidine 393, and histidine 518 together coordinate Zn(2+).

It belongs to the class-II aminoacyl-tRNA synthetase family. Homodimer. Requires Zn(2+) as cofactor.

The protein localises to the cytoplasm. It carries out the reaction tRNA(Thr) + L-threonine + ATP = L-threonyl-tRNA(Thr) + AMP + diphosphate + H(+). In terms of biological role, catalyzes the attachment of threonine to tRNA(Thr) in a two-step reaction: L-threonine is first activated by ATP to form Thr-AMP and then transferred to the acceptor end of tRNA(Thr). Also edits incorrectly charged L-seryl-tRNA(Thr). This is Threonine--tRNA ligase from Myxococcus xanthus (strain DK1622).